A 428-amino-acid chain; its full sequence is Probable 4-methylmuconolactone transporter (428 aa).

At 1 to 26 (MFAWYKAGSPQQKKTFWACYSGWALD) the chain is on the cytoplasmic side. A helical membrane pass occupies residues 27-47 (SFDMQMFSFLLPALTLTWGLT). Residues 48–50 (KAE) are Periplasmic-facing. Residues 51-71 (VGVLGTVALVVTAIGGWGAGI) form a helical membrane-spanning segment. The Cytoplasmic portion of the chain corresponds to 72–80 (LSDRYGRAR). The helical transmembrane segment at 81-101 (ILVLAIIWFTLFGVLAGFAQS) threads the bilayer. Topologically, residues 102 to 110 (YQQLLIART) are periplasmic. A helical transmembrane segment spans residues 111–131 (LQGLGFGGEWAVGAALMAEVI). Residues 132–145 (DSRHRGKAIGFVQS) lie on the Cytoplasmic side of the membrane. The helical transmembrane segment at 146–166 (GFALGWALAVVVATLLLAWLP) threads the bilayer. Lys-167 is a topological domain (periplasmic). Residues 168 to 188 (EMAWRVAFWSGIIPALIVLFI) form a helical membrane-spanning segment. Topologically, residues 189-227 (RRHVKDSSMFERARQSRAPRASLSSVFNRKYARTLALSS) are cytoplasmic. A helical membrane pass occupies residues 228–248 (VLVIGLQAGCYAILVWLPSLL). Topologically, residues 249 to 252 (NQRQ) are periplasmic. Residues 253–273 (VAAGSMIVTVFIMAFGSFCGF) form a helical membrane-spanning segment. Residues 274–287 (AVTADLSDRIGRRP) are Cytoplasmic-facing. A helical transmembrane segment spans residues 288–308 (TLILLSVCAWIVTVSYMLLPL). Residues 309-314 (NTTLTA) lie on the Periplasmic side of the membrane. Residues 315 to 335 (ILGFLVGFSAIGMFAALGPFL) form a helical membrane-spanning segment. Over 336-356 (SELFPTNVRTTCMGFAYNVGK) the chain is Cytoplasmic. The chain crosses the membrane as a helical span at residues 357-371 (SIGAGSVVGVGVLST). The Periplasmic portion of the chain corresponds to 372–377 (HIGLAN). A helical transmembrane segment spans residues 378–398 (AMGTFCLVAYAFAVFGIMLLP). The Cytoplasmic segment spans residues 399 to 428 (ETRGIAIENIGEADAHSPAAPLAQPASARS).

This sequence belongs to the major facilitator superfamily. Sugar transporter (TC 2.A.1.1) family.

The protein resides in the cell inner membrane. Probable uptake of 4-methylmuconolactone. This is Probable 4-methylmuconolactone transporter from Cupriavidus pinatubonensis (strain JMP 134 / LMG 1197) (Cupriavidus necator (strain JMP 134)).